A 24-amino-acid chain; its full sequence is Coenzyme PQQ synthesis protein A (24 aa).

The segment at residues 16-20 (EVTMY) is a cross-link (pyrroloquinoline quinone (Glu-Tyr)).

It belongs to the PqqA family.

It participates in cofactor biosynthesis; pyrroloquinoline quinone biosynthesis. In terms of biological role, required for coenzyme pyrroloquinoline quinone (PQQ) biosynthesis. PQQ is probably formed by cross-linking a specific glutamate to a specific tyrosine residue and excising these residues from the peptide. This is Coenzyme PQQ synthesis protein A from Pseudomonas syringae pv. syringae (strain B728a).